The primary structure comprises 329 residues: MAEAGTGEPSPSVEGEHGTEYDTLPSDTVSLSDSDSDLSLPGGAEVEALSPMGLPGEEDSGPDEPPSPPSGLLPATVQPFHLRGMSSTFSQRSRDIFDCLEGAARRAPSSVAHTSMSDNGGFKRPLAPSGRSPVEGLGRAHRSPASPRVPPVPDYVAHPERWTKYSLEDVTEVSEQSNQATALAFLGSQSLAAPTDCVSSFNQDPSSCGEGRVIFTKPVRGVEARHERKRVLGKVGEPGRGGLGNPATDRGEGPVELAHLAGPGSPEAEEWGSHHGGLQEVEALSGSVHSGSVPGLPPVETVGFHGSRKRSRDHFRNKSSSPEDPGAEV.

2 disordered regions span residues 1–88 and 104–156; these read MAEA…MSST and ARRA…PDYV. The segment covering 22–41 has biased composition (low complexity); the sequence is DTLPSDTVSLSDSDSDLSLP. Serine 60, serine 67, serine 86, serine 132, serine 143, and serine 146 each carry phosphoserine. Positions 77–104 are hom2; mediates interaction with the U5 snRNP complexes and required for spliceosomal tri-snRNP complex assembly; the sequence is VQPFHLRGMSSTFSQRSRDIFDCLEGAA. Residues 149 to 316 form an interaction with SNRNP200 region; sequence VPPVPDYVAH…SRKRSRDHFR (168 aa). The segment at 150-186 is hom3; mediates interaction with the U5 snRNP complexes; it reads PPVPDYVAHPERWTKYSLEDVTEVSEQSNQATALAFL. Residues 201–250 form a hom4; necessary for interaction with the PRPF19 complex and required for spliceosomal tri-snRNP complex assembly region; that stretch reads FNQDPSSCGEGRVIFTKPVRGVEARHERKRVLGKVGEPGRGGLGNPATDR. Lysine 217 is subject to N6-acetyllysine. Positions 221–329 are disordered; the sequence is GVEARHERKR…SSPEDPGAEV (109 aa). Serine 265 carries the post-translational modification Phosphoserine. Residues 306–317 show a composition bias toward basic residues; the sequence is GSRKRSRDHFRN. The residue at position 321 (serine 321) is a Phosphoserine.

The protein belongs to the TSSC4 family. Interacts in a RNA-independent manner with distinct U5 snRNP-containing complexes, the mono-U5 snRNP and the post-splicing U5 snRNP-PRPF19 complex. Interacts with SNRNP200; the interaction is direct, excludes recruitment of C9ORF78 and WBP4 to SNRNP200 and negatively regulates its RNA helicase activity. Interacts with PRPF8; the interaction is direct. As to expression, expressed in fetal brain, lung, liver and kidney. Widely expressed in adult tissues.

It localises to the nucleus. The protein localises to the cytoplasm. Protein associated with the U5 snRNP, during its maturation and its post-splicing recycling and which is required for spliceosomal tri-snRNP complex assembly in the nucleus. Has a molecular sequestering activity and transiently hinders SNRNP200 binding sites for constitutive splicing factors that intervene later during the assembly of the spliceosome and splicing. Together with its molecular sequestering activity, may also function as a molecular adapter and placeholder, coordinating the assembly of the U5 snRNP and its association with the U4/U6 di-snRNP. This Homo sapiens (Human) protein is U5 small nuclear ribonucleoprotein TSSC4.